A 385-amino-acid chain; its full sequence is tRNA pseudouridine synthase D (385 aa).

D86 (nucleophile) is an active-site residue. Residues 165–305 (GFPNYFGNQR…TRFLQKDIAP (141 aa)) form the TRUD domain.

The protein belongs to the pseudouridine synthase TruD family.

The catalysed reaction is uridine(13) in tRNA = pseudouridine(13) in tRNA. Functionally, responsible for synthesis of pseudouridine from uracil-13 in transfer RNAs. The polypeptide is tRNA pseudouridine synthase D (Helicobacter hepaticus (strain ATCC 51449 / 3B1)).